We begin with the raw amino-acid sequence, 123 residues long: Protein LLP homolog (123 aa).

Positions 1–21 are enriched in basic residues; it reads MAKSIRSKWKRKMRAEKRKKN. 2 disordered regions span residues 1–23 and 55–123; these read MAKS…KNAP and KINE…KLAW. Residues 70–89 are compositionally biased toward basic and acidic residues; sequence DSSKMDMELKRNKKNLRDQH. Over residues 100–123 the composition is skewed to basic residues; sequence QQKKLKSQCGKKKGKSKQAKKLAW.

The protein belongs to the learning-associated protein family.

The protein localises to the nucleus. It is found in the nucleolus. It localises to the chromosome. Functionally, regulates dendritic and spine growth and synaptic transmission. The sequence is that of Protein LLP homolog (llph) from Xenopus tropicalis (Western clawed frog).